Reading from the N-terminus, the 152-residue chain is Transcriptional repressor NrdR (152 aa).

Residues 3 to 34 (CPKCGSLNDKVVDTRQSKDGTVIRRRRECLDC) fold into a zinc finger. In terms of domain architecture, ATP-cone spans 49–139 (IVVKKKNGTT…VYNEFQDIKD (91 aa)).

It belongs to the NrdR family. It depends on Zn(2+) as a cofactor.

Its function is as follows. Negatively regulates transcription of bacterial ribonucleotide reductase nrd genes and operons by binding to NrdR-boxes. In Persephonella marina (strain DSM 14350 / EX-H1), this protein is Transcriptional repressor NrdR.